Here is a 515-residue protein sequence, read N- to C-terminus: RNA-splicing ligase RtcB homolog (515 aa).

Mn(2+) is bound by residues Asp-121, Cys-124, His-229, His-269, and His-363. GMP is bound at residue 228-232 (NHYGE). Residues 363–364 (HN), 412–415 (GGTM), Ser-419, 438–441 (HGSG), and Lys-514 contribute to the GMP site. His-438 serves as the catalytic GMP-histidine intermediate.

Belongs to the RtcB family. As to quaternary structure, catalytic component of the tRNA-splicing ligase complex. Mn(2+) serves as cofactor.

The catalysed reaction is a 3'-end 3'-phospho-ribonucleotide-RNA + a 5'-end dephospho-ribonucleoside-RNA + GTP = a ribonucleotidyl-ribonucleotide-RNA + GMP + diphosphate. It catalyses the reaction a 3'-end 2',3'-cyclophospho-ribonucleotide-RNA + a 5'-end dephospho-ribonucleoside-RNA + GTP + H2O = a ribonucleotidyl-ribonucleotide-RNA + GMP + diphosphate + H(+). Functionally, catalytic subunit of the tRNA-splicing ligase complex that acts by directly joining spliced tRNA halves to mature-sized tRNAs by incorporating the precursor-derived splice junction phosphate into the mature tRNA as a canonical 3',5'-phosphodiester. May act as an RNA ligase with broad substrate specificity, and may function toward other RNAs. This Theileria annulata protein is RNA-splicing ligase RtcB homolog.